Consider the following 63-residue polypeptide: Megourin-1 (63 aa).

In terms of assembly, monomer. Post-translationally, contains four disulfide bonds.

It localises to the secreted. Functionally, has antimicrobial activity against Gram-positive bacteria and fungi. This Megoura viciae (Vetch aphid) protein is Megourin-1.